The sequence spans 353 residues: 3-ketosteroid-9-alpha-monooxygenase, ferredoxin reductase component (353 aa).

The 110-residue stretch at 8–117 (SHVLELQVAE…LAPSGTFVPK (110 aa)) folds into the FAD-binding FR-type domain. Residues 264–353 (ATAVVTLDGT…SDSVEVTYDE (90 aa)) form the 2Fe-2S ferredoxin-type domain. [2Fe-2S] cluster is bound by residues C300, C305, C308, and C338.

Monomer. The two-component system 3-ketosteroid-9-alpha-monooxygenase is composed of an oxygenase component KshA and a reductase component KshB. The cofactor is FAD. [2Fe-2S] cluster serves as cofactor.

The enzyme catalyses androsta-1,4-diene-3,17-dione + 2 reduced [2Fe-2S]-[ferredoxin] + O2 + 2 H(+) = 9alpha-hydroxyandrosta-1,4-diene-3,17-dione + 2 oxidized [2Fe-2S]-[ferredoxin] + H2O. It functions in the pathway lipid metabolism; steroid biosynthesis. Its function is as follows. Involved in the degradation of cholesterol. Catalyzes the introduction of a 9a-hydroxyl moiety into 1,4-androstadiene-3,17-dione (ADD) to yield the 9alpha-hydroxy-1,4-androstadiene-3,17-dione (9OHADD) intermediate which spontaneously form 3-hydroxy-9,10-seconandrost-1,3,5(10)-triene-9,17-dione (HSA) via the meta-cleavage of ring B with concomitant aromatization of ring A. This chain is 3-ketosteroid-9-alpha-monooxygenase, ferredoxin reductase component (kshB), found in Mycolicibacterium smegmatis (strain ATCC 700084 / mc(2)155) (Mycobacterium smegmatis).